The chain runs to 191 residues: Probable DNA replication complex GINS protein PSF1 (191 aa).

Belongs to the GINS1/PSF1 family. As to quaternary structure, component of the GINS complex which is a heterotetramer of gins1, gins2, gins3 and gins4.

The protein localises to the nucleus. Its function is as follows. The GINS complex plays an essential role in the initiation of DNA replication. This Dictyostelium discoideum (Social amoeba) protein is Probable DNA replication complex GINS protein PSF1 (gins1).